A 374-amino-acid chain; its full sequence is Alcohol dehydrogenase 3, mitochondrial (374 aa).

A mitochondrion-targeting transit peptide spans 1-26 (MLRLTSARSIVSPLRKGAFGSIRTLA). Zn(2+) contacts are provided by C70, H93, C124, C127, C130, C138, and C180. Residues 204 to 210 (GAAGGLG), D228, K233, 295 to 297 (VGL), and R367 each bind NAD(+).

It belongs to the zinc-containing alcohol dehydrogenase family. In terms of assembly, homotetramer. The cofactor is Zn(2+).

The protein localises to the mitochondrion matrix. The catalysed reaction is a primary alcohol + NAD(+) = an aldehyde + NADH + H(+). It catalyses the reaction a secondary alcohol + NAD(+) = a ketone + NADH + H(+). In Kluyveromyces lactis (strain ATCC 8585 / CBS 2359 / DSM 70799 / NBRC 1267 / NRRL Y-1140 / WM37) (Yeast), this protein is Alcohol dehydrogenase 3, mitochondrial (ADH3).